The following is a 162-amino-acid chain: tRNA-specific adenosine deaminase (162 aa).

The CMP/dCMP-type deaminase domain occupies 3 to 115; sequence DSDKYFMKCA…KNLQKYICCK (113 aa). His-54 lines the Zn(2+) pocket. Glu-56 (proton donor) is an active-site residue. The Zn(2+) site is built by Cys-84 and Cys-87.

This sequence belongs to the cytidine and deoxycytidylate deaminase family. As to quaternary structure, homodimer. It depends on Zn(2+) as a cofactor.

The enzyme catalyses adenosine(34) in tRNA + H2O + H(+) = inosine(34) in tRNA + NH4(+). Functionally, catalyzes the deamination of adenosine to inosine at the wobble position 34 of tRNA(Arg2). The polypeptide is tRNA-specific adenosine deaminase (Buchnera aphidicola subsp. Baizongia pistaciae (strain Bp)).